Reading from the N-terminus, the 444-residue chain is Na(+)/H(+) antiporter NhaA 2 (444 aa).

11 consecutive transmembrane segments (helical) span residues 21–41 (FSGI…NSPF), 64–84 (FSIH…MVGL), 102–122 (AFPV…YYVL), 131–151 (GFGI…LLLG), 160–180 (VFLV…IAVF), 185–205 (EGLH…LTGI), 212–232 (HLGV…HSGI), 307–327 (ALQP…NAGV), 342–362 (LGVI…LTFL), 377–397 (WSHI…SMFV), and 413–433 (IAIL…LIIN).

Belongs to the NhaA Na(+)/H(+) (TC 2.A.33) antiporter family.

Its subcellular location is the cell inner membrane. It carries out the reaction Na(+)(in) + 2 H(+)(out) = Na(+)(out) + 2 H(+)(in). In terms of biological role, na(+)/H(+) antiporter that extrudes sodium in exchange for external protons. The protein is Na(+)/H(+) antiporter NhaA 2 of Helicobacter hepaticus (strain ATCC 51449 / 3B1).